The following is a 129-amino-acid chain: Small ribosomal subunit protein uS11 (129 aa).

Positions Thr108–Lys129 are disordered. The span at Pro117 to Lys129 shows a compositional bias: basic residues.

This sequence belongs to the universal ribosomal protein uS11 family. As to quaternary structure, part of the 30S ribosomal subunit. Interacts with proteins S7 and S18. Binds to IF-3.

Located on the platform of the 30S subunit, it bridges several disparate RNA helices of the 16S rRNA. Forms part of the Shine-Dalgarno cleft in the 70S ribosome. This is Small ribosomal subunit protein uS11 from Mycoplasmopsis synoviae (strain 53) (Mycoplasma synoviae).